The chain runs to 264 residues: MEMO1 family protein Mbur_2394 (264 aa).

The protein belongs to the MEMO1 family.

The chain is MEMO1 family protein Mbur_2394 from Methanococcoides burtonii (strain DSM 6242 / NBRC 107633 / OCM 468 / ACE-M).